The primary structure comprises 211 residues: LexA repressor (211 aa).

The segment at residues 29 to 49 is a DNA-binding region (H-T-H motif); it reads VREICTAVGLRSTSTVHSHLN. Catalysis depends on for autocatalytic cleavage activity residues S131 and K169.

This sequence belongs to the peptidase S24 family. In terms of assembly, homodimer.

The catalysed reaction is Hydrolysis of Ala-|-Gly bond in repressor LexA.. Its function is as follows. Represses a number of genes involved in the response to DNA damage (SOS response), including recA and lexA. In the presence of single-stranded DNA, RecA interacts with LexA causing an autocatalytic cleavage which disrupts the DNA-binding part of LexA, leading to derepression of the SOS regulon and eventually DNA repair. This is LexA repressor from Clostridioides difficile (strain 630) (Peptoclostridium difficile).